The chain runs to 99 residues: Integration host factor subunit alpha (99 aa).

Belongs to the bacterial histone-like protein family. Heterodimer of an alpha and a beta chain.

In terms of biological role, this protein is one of the two subunits of integration host factor, a specific DNA-binding protein that functions in genetic recombination as well as in transcriptional and translational control. This is Integration host factor subunit alpha from Xylella fastidiosa (strain M12).